A 308-amino-acid chain; its full sequence is Protein translocase subunit SecF (308 aa).

A run of 6 helical transmembrane segments spans residues 18–38 (AYVF…TRGL), 134–154 (GAIY…LIRF), 160–180 (LGAV…FSLL), 193–213 (TIIA…VVVF), 244–264 (IITS…GGEV), and 272–292 (LIVG…PVVI).

Belongs to the SecD/SecF family. SecF subfamily. As to quaternary structure, forms a complex with SecD. Part of the essential Sec protein translocation apparatus which comprises SecA, SecYEG and auxiliary proteins SecDF. Other proteins may also be involved.

It localises to the cell inner membrane. Functionally, part of the Sec protein translocase complex. Interacts with the SecYEG preprotein conducting channel. SecDF uses the proton motive force (PMF) to complete protein translocation after the ATP-dependent function of SecA. The sequence is that of Protein translocase subunit SecF from Rhodothermus marinus (strain ATCC 43812 / DSM 4252 / R-10) (Rhodothermus obamensis).